The sequence spans 269 residues: Tryptophan synthase alpha chain (269 aa).

Residues glutamate 49 and aspartate 60 each act as proton acceptor in the active site.

This sequence belongs to the TrpA family. In terms of assembly, tetramer of two alpha and two beta chains.

It catalyses the reaction (1S,2R)-1-C-(indol-3-yl)glycerol 3-phosphate + L-serine = D-glyceraldehyde 3-phosphate + L-tryptophan + H2O. Its pathway is amino-acid biosynthesis; L-tryptophan biosynthesis; L-tryptophan from chorismate: step 5/5. The alpha subunit is responsible for the aldol cleavage of indoleglycerol phosphate to indole and glyceraldehyde 3-phosphate. This is Tryptophan synthase alpha chain from Pseudomonas putida (Arthrobacter siderocapsulatus).